Consider the following 230-residue polypeptide: UPF0173 metal-dependent hydrolase Pden_0574 (230 aa).

This sequence belongs to the UPF0173 family.

The polypeptide is UPF0173 metal-dependent hydrolase Pden_0574 (Paracoccus denitrificans (strain Pd 1222)).